A 357-amino-acid chain; its full sequence is Chorismate synthase (357 aa).

Arg48 is a binding site for NADP(+). FMN is bound by residues 125–127, 238–239, Gly282, 297–301, and Arg323; these read RSS, NA, and KPTSS.

Belongs to the chorismate synthase family. In terms of assembly, homotetramer. FMNH2 is required as a cofactor.

The enzyme catalyses 5-O-(1-carboxyvinyl)-3-phosphoshikimate = chorismate + phosphate. It participates in metabolic intermediate biosynthesis; chorismate biosynthesis; chorismate from D-erythrose 4-phosphate and phosphoenolpyruvate: step 7/7. Functionally, catalyzes the anti-1,4-elimination of the C-3 phosphate and the C-6 proR hydrogen from 5-enolpyruvylshikimate-3-phosphate (EPSP) to yield chorismate, which is the branch point compound that serves as the starting substrate for the three terminal pathways of aromatic amino acid biosynthesis. This reaction introduces a second double bond into the aromatic ring system. This chain is Chorismate synthase, found in Gluconacetobacter diazotrophicus (strain ATCC 49037 / DSM 5601 / CCUG 37298 / CIP 103539 / LMG 7603 / PAl5).